Here is an 804-residue protein sequence, read N- to C-terminus: MGKKRIVFFACLLLFTVLLRFSYAGITTESPLSVEQTLSSSNGIYELGFFSPNNSQNLYVGIWFKGIIPRVVVWVANRETPTTDTSANLAISSNGSLLLFNGKHGVVWSIGENFASNGSRAELTDNGNLVVIDNASGRTLWESFEHFGDTMLPFSSLMYNLATGEKRVLTSWKTDTDPSPGVFVGQITPQVPSQVLIMRGSTRYYRTGPWAKTRFTGIPLMDDTYASPFSLQQDANGSGFFTYFDRSFKLSRIIISSEGSMKRFRHNGTDWELSYMAPANSCDIYGVCGPFGLCIVSVPLKCKCLKGFVPHSTEEWKRGNWTGGCARLTELHCQGNSTGKDVNIFHPVTNVKLPDFYEYESSVDAEECHQSCLHNCSCLAFAYIHGIGCLIWNQNLMDAVQFSAGGEILSIRLAHSELGGNKRNKIIVASTVSLSLFVILTSAAFGFWRYRVKHKAYTLKDAWRNDLKSKEVPGLEFFEMNTIQTATNNFSLSNKLGQGGFGSVYKGKLQDGKEIAVKQLSSSSGQGKEEFMNEIVLISKLQHRNLVRVLGCCIEGEEKLLIYEFMLNKSLDTFVFDARKKLEVDWPKRFDIVQGIARGLLYLHRDSRLKVIHRDLKVSNILLDEKMNPKISDFGLARMYEGTQCQDKTRRVVGTLGYMSPEYAWTGVFSEKSDIYSFGVLLLEIIIGEKISRFSYGEEGKTLLAYAWESWGETKGIDLLDQDLADSCRPLEVGRCVQIGLLCVQHQPADRPNTLELLAMLTTTSDLPSPKQPTFVVHSRDDESSLSKDLFTVNEMTQSMILGR.

The first 24 residues, 1–24 (MGKKRIVFFACLLLFTVLLRFSYA), serve as a signal peptide directing secretion. The Bulb-type lectin domain maps to 25–144 (GITTESPLSV…ASGRTLWESF (120 aa)). At 25 to 425 (GITTESPLSV…SELGGNKRNK (401 aa)) the chain is on the extracellular side. 6 N-linked (GlcNAc...) asparagine glycosylation sites follow: Asn53, Asn94, Asn117, Asn134, Asn236, and Asn267. The EGF-like domain occupies 278–314 (PANSCDIYGVCGPFGLCIVSVPLKCKCLKGFVPHSTE). 2 cysteine pairs are disulfide-bonded: Cys282/Cys294 and Cys288/Cys302. N-linked (GlcNAc...) asparagine glycans are attached at residues Asn320, Asn336, and Asn375. The PAN domain occupies 333 to 415 (CQGNSTGKDV…GEILSIRLAH (83 aa)). Cystine bridges form between Cys368–Cys389 and Cys372–Cys378. A helical transmembrane segment spans residues 426–446 (IIVASTVSLSLFVILTSAAFG). Residues 447–804 (FWRYRVKHKA…EMTQSMILGR (358 aa)) are Cytoplasmic-facing. In terms of domain architecture, Protein kinase spans 490-775 (FSLSNKLGQG…DLPSPKQPTF (286 aa)). ATP contacts are provided by residues 496–504 (LGQGGFGSV) and Lys518. Residues Ser524 and Ser539 each carry the phosphoserine modification. The segment at 579–596 (RKKLEVDWPKRFDIVQGI) is caM-binding. Residue Asp615 is the Proton acceptor of the active site. Residues Ser619 and Ser632 each carry the phosphoserine modification. Thr649 carries the post-translational modification Phosphothreonine. Ser692 is subject to Phosphoserine.

This sequence belongs to the protein kinase superfamily. Ser/Thr protein kinase family.

The protein resides in the cell membrane. The enzyme catalyses L-seryl-[protein] + ATP = O-phospho-L-seryl-[protein] + ADP + H(+). The catalysed reaction is L-threonyl-[protein] + ATP = O-phospho-L-threonyl-[protein] + ADP + H(+). The sequence is that of G-type lectin S-receptor-like serine/threonine-protein kinase At1g61490 from Arabidopsis thaliana (Mouse-ear cress).